The chain runs to 1520 residues: DNA topoisomerase 2 top-2 (1520 aa).

Acidic residues predominate over residues 1–10 (MSDSDSEFSI). Residues 1 to 40 (MSDSDSEFSIEDSPKKKTAPKKEKASPKKKKDDANESMVM) form a disordered region. Positions 12 to 34 (DSPKKKTAPKKEKASPKKKKDDA) are enriched in basic and acidic residues. Residues Asn-126, Asn-155, 183 to 185 (SSN), 196 to 203 (GRNGYGAK), and 411 to 413 (QTK) each bind ATP. Positions 490–607 (CTLILTEGDS…SLIQRNFVEE (118 aa)) constitute a Toprim domain. Mg(2+)-binding residues include Glu-496, Asp-576, and Asp-578. Residues 750-1219 (IPCLVDGFKP…TWQDLWHEDL (470 aa)) form the Topo IIA-type catalytic domain. Tyr-840 functions as the O-(5'-phospho-DNA)-tyrosine intermediate in the catalytic mechanism. A disordered region spans residues 1249-1520 (AADAKTGRGP…RGRVVDSDSD (272 aa)). The segment covering 1283–1320 (TKAKYEKMSQPKKERVKKEPKEPKEPKKVKKEGQDIKK) has biased composition (basic and acidic residues). The segment covering 1342 to 1364 (MSEESDVEFDEGIDFDSDDDGVE) has biased composition (acidic residues).

This sequence belongs to the type II topoisomerase family. As to quaternary structure, homodimer. Interacts with nmad-1; the interaction is required for localization of top-2 to DNA. Interacts with gcna-1; this interaction allows the resolution of topoisomerase 2 DNA-protein cross-links. Mg(2+) serves as cofactor. The cofactor is Mn(2+). Requires Ca(2+) as cofactor. Expressed in the hermaphrodite and male germline.

The protein resides in the nucleus. It is found in the nucleoplasm. The protein localises to the chromosome. It localises to the cytoplasm. Its subcellular location is the cytoskeleton. The protein resides in the spindle. The catalysed reaction is ATP-dependent breakage, passage and rejoining of double-stranded DNA.. In terms of biological role, control of topological states of DNA by transient breakage and subsequent rejoining of DNA strands. Topoisomerase II makes double-strand breaks. Essential during mitosis in the adult germline and during embryogenesis for proper segregation of daughter chromosomes. Required for centromere resolution during mitosis. Required for chromosome segregation in anaphase of meiosis I during spermatogenesis. Promotes cleavage furrow stability during cytokinesis upon the presence of chromatin obstructions. Promotes DNA break formation upon zygotic genome activation in the Z2 and Z3 primordial germ cells in L1 larvae, thereby activating a checkpoint response. Essential for embryogenesis. This chain is DNA topoisomerase 2 top-2, found in Caenorhabditis elegans.